The following is a 289-amino-acid chain: Thymidylate synthase (289 aa).

DUMP is bound by residues R26 and 151–152; that span reads RR. C171 serves as the catalytic Nucleophile. DUMP-binding positions include 191–194, N202, and 232–234; these read RSGD and HVY. D194 lines the (6R)-5,10-methylene-5,6,7,8-tetrahydrofolate pocket. Residue A288 coordinates (6R)-5,10-methylene-5,6,7,8-tetrahydrofolate.

This sequence belongs to the thymidylate synthase family. In terms of assembly, homodimer.

The enzyme catalyses dUMP + (6R)-5,10-methylene-5,6,7,8-tetrahydrofolate = 7,8-dihydrofolate + dTMP. Its pathway is pyrimidine metabolism; dTTP biosynthesis. This chain is Thymidylate synthase, found in Equus caballus (Horse).